The chain runs to 637 residues: Keratin, type II cytoskeletal 1 (637 aa).

The interval 1–187 (MSLQCSSRSL…DPQIQKVKSQ (187 aa)) is head. R12 is modified (omega-N-methylarginine). Phosphoserine occurs at positions 21 and 24. R49 is subject to Omega-N-methylarginine. S67 is modified (phosphoserine). Positions 180 to 328 (QIQKVKSQER…DIDFFSALYQ (149 aa)) form a coiled coil. Positions 188-223 (EREQIKSLNDKFASFIDKVRFLEQQNQVLQTKWELL) are coil 1A. An IF rod domain is found at 188–501 (EREQIKSLND…KLLEGEEIRM (314 aa)). A linker 1 region spans residues 224–243 (QQVDTTTRTQNLDPFFENYI). Positions 244–334 (SILRRKVDSL…ALYQMEMSQM (91 aa)) are coil 1B. Position 284 is an N6,N6-dimethyllysine (K284). The tract at residues 335–358 (QTQISETNVVLSMDNNRSLDLDGI) is linker 12. S352 is modified (phosphoserine). The interval 359–497 (ISEVKAQYDS…ATYKKLLEGE (139 aa)) is coil 2. The stretch at 397–483 (DSVRNTKMEI…QELMNTKLAL (87 aa)) forms a coiled coil. The interval 498–637 (EIRMSGECTP…VSTSYSRGTK (140 aa)) is tail. Disordered stretches follow at residues 505–533 (CTPN…SGGG) and 563–637 (YGGG…RGTK). Low complexity predominate over residues 509–524 (VSVSVSTSHTSMSGSS). 3 positions are modified to omega-N-methylarginine: R526, R585, and R607. Over residues 563–618 (YGGGSGGGSYGGGSGGGSSGSHRGGSGGGGGSSGGSYGGSSGGGRGGSSSGGGGVK) the composition is skewed to gly residues. Residues 624-637 (TVKFVSTSYSRGTK) show a composition bias toward polar residues.

The protein belongs to the intermediate filament family. As to quaternary structure, heterotetramer of two type I and two type II keratins. Heterodimer with KRT10. Two heterodimers of KRT1 and KRT10 form a heterotetramer. Forms a heterodimer with KRT14; the interaction is more abundant in the absence of KRT5. Interacts with PLEC isoform 1C, when in a heterodimer with KRT10. Interacts with ITGB1 in the presence of RACK1 and SRC, and with RACK1. Interacts with C1QBP; the association represents a cell surface kininogen receptor. Interacts with EPPK1; interaction is dependent of higher-order structure of intermediate filament. Post-translationally, undergoes deimination of some arginine residues (citrullination). As to expression, expressed in the infundibular regions of the ear, the interfollicular epidermis of the back, in the interscale regions containing hair follicles in the tail, and in the soles of the footpads (at protein level).

It localises to the cell membrane. Its subcellular location is the cytoplasm. May regulate the activity of kinases such as PKC and SRC via binding to integrin beta-1 (ITB1) and the receptor of activated protein C kinase 1 (RACK1). In complex with C1QBP is a high affinity receptor for kininogen-1/HMWK. This chain is Keratin, type II cytoskeletal 1 (Krt1), found in Mus musculus (Mouse).